The primary structure comprises 320 residues: Putative FBD-associated F-box protein At3g60710 (320 aa).

The F-box domain maps to 2 to 48 (EDLISQLPNELLQEILLNLPTSESVRTSVLPTRWRNLWQSVPGLYLI). One can recognise an FBD domain in the interval 212–268 (MEEIASSPVPKCLQTSIENVKIKMTPKADQEKSRKAETEVANYILENATLLKLTLWL).

This chain is Putative FBD-associated F-box protein At3g60710, found in Arabidopsis thaliana (Mouse-ear cress).